Reading from the N-terminus, the 1416-residue chain is Telomere-associated protein RIF1 (1416 aa).

Disordered regions lie at residues 789 to 858 (PIRK…PVVQ), 886 to 984 (PEVA…HLTG), 1021 to 1054 (ARAQDRAEQVSTPTSELNELTGTDHTSTPIQAPP), and 1166 to 1186 (TARTATTDKSLDKSTGEAPEE). Residues 928 to 945 (GSSGDPAASAGAVAAGEM) show a composition bias toward low complexity. Residues 1029–1050 (QVSTPTSELNELTGTDHTSTPI) are compositionally biased toward polar residues.

Belongs to the RIF1 family. Highly divergent. As to quaternary structure, interacts with Pp1-87b. Interacts with SuUR (via SNF2-like region). Post-translationally, phosphorylated, probably by Cdk1; phosphorylation regulates dissociation from heterochromatin. Expressed in nurse cells and follicle cells in the adult female (at protein level). Detected in adult at extremely low levels.

The protein resides in the nucleus. The protein localises to the chromosome. It localises to the telomere. Its function is as follows. Regulates the timing of initiation of DNA replication. Functions in copy number control by promoting the underreplication of DNA, which is found in many late replicating euchromatic regions of salivary gland polytene chromosomes. Promotes underreplication by localizing to active DNA replication forks in a partially SuUR-dependent manner, and inhibiting replication fork progression. Might also work as an adapter to recruit Pp1-87B to multiple sites on the chromosome and may function with Pp1-87B to mediate underreplication. Plays an essential role in embryonic development, in the transition from larvae to pupae and, probably, in proliferating tissues later on. In embryos, during mid-blastula transition, binds to and selectively delays the replication of large blocks of repetitive DNA satellite sequences during S phase in response to the activity of Cdk1; maternal Rif1 is specifically required for the normal extension of S phase 14. Unlike mammalian orthologs, does not appear to play a role in DNA damage repair. The sequence is that of Telomere-associated protein RIF1 from Drosophila melanogaster (Fruit fly).